Reading from the N-terminus, the 1171-residue chain is Zinc finger BED domain-containing protein 4 (1171 aa).

The tract at residues 25 to 62 (EEEDDDGIPPDSLERMDFKSEQEDMKQTDSGGERAGLG) is disordered. Basic and acidic residues predominate over residues 36-51 (SLERMDFKSEQEDMKQ). Residue lysine 43 forms a Glycyl lysine isopeptide (Lys-Gly) (interchain with G-Cter in SUMO2) linkage. BED-type zinc fingers lie at residues 115–172 (RKKS…LIQE) and 285–342 (RRRS…VLQE). Zn(2+)-binding residues include cysteine 136, cysteine 139, histidine 160, histidine 165, cysteine 306, cysteine 309, histidine 330, and histidine 335. Residues 362 to 385 (LLPPEGELSSVSSSPVKPVRESPS) are compositionally biased toward low complexity. The segment at 362–405 (LLPPEGELSSVSSSPVKPVRESPSASSSPDRLTEDLQSHLNPGD) is disordered. 2 consecutive BED-type zinc fingers follow at residues 456-512 (RLKS…VGSQ) and 558-615 (KKTS…LKTE). Zn(2+) is bound by residues cysteine 477 and cysteine 480. Lysine 489 participates in a covalent cross-link: Glycyl lysine isopeptide (Lys-Gly) (interchain with G-Cter in SUMO2). Residues histidine 500, histidine 505, cysteine 579, cysteine 582, histidine 603, and histidine 608 each contribute to the Zn(2+) site. The disordered stretch occupies residues 614-640 (TEVSETARPSSPDTRVPRGTELSGASS). The residue at position 624 (serine 624) is a Phosphoserine. Residues 1086–1171 (LAYLEEEVLE…VNLPLIYFQY (86 aa)) form a required for homodimerization and nuclear accumulation region.

In terms of assembly, homodimer; via C-terminus. Interacts with MYH9. Interacts with SAFB/SAFB1. Expressed in testis, heart, lung, and weakly expressed in brain, liver, muscle, placenta and small intestine. Expressed in the retina, found in the cone photoreceptors, Mueller cells, cone pedicles and in the innermost retinal layer.

The protein resides in the nucleus. It localises to the cytoplasm. It is found in the photoreceptor inner segment. Transcriptional regulator that binds to poly-guanine tracts in gene promoters and activates transcription. Able to bind single- and double-stranded DNA and RNA. This Homo sapiens (Human) protein is Zinc finger BED domain-containing protein 4 (ZBED4).